Consider the following 245-residue polypeptide: tRNA pseudouridine synthase A 2 (245 aa).

Asp-53 serves as the catalytic Nucleophile. Tyr-111 contacts substrate.

Belongs to the tRNA pseudouridine synthase TruA family. Homodimer.

The enzyme catalyses uridine(38/39/40) in tRNA = pseudouridine(38/39/40) in tRNA. Functionally, formation of pseudouridine at positions 38, 39 and 40 in the anticodon stem and loop of transfer RNAs. This Bacillus thuringiensis subsp. konkukian (strain 97-27) protein is tRNA pseudouridine synthase A 2.